The primary structure comprises 1277 residues: Clustered mitochondria protein 1 (1277 aa).

Disordered regions lie at residues 19–39 (LPKE…QSSK) and 148–176 (LPLG…NTFK). A compositionally biased stretch (basic residues) spans 27 to 36 (HNTKHLKKTQ). A compositionally biased stretch (basic and acidic residues) spans 153–176 (IKERSKQEEKDEKSDPEEKKNTFK). A Clu domain is found at 339–596 (PPNNPDYLRL…NTYPLDINFA (258 aa)). TPR repeat units lie at residues 704 to 738 (GINM…VEQD), 1020 to 1053 (AEKY…YERV), and 1148 to 1181 (GYTE…FTKQ). The interval 1212-1277 (LAQDQMSTTG…TNNKKKHGKK (66 aa)) is disordered. Residues 1235-1249 (KKDDVKPELANKSVD) are compositionally biased toward basic and acidic residues. S1247 bears the Phosphoserine mark. The span at 1264-1277 (SKNKTNNKKKHGKK) shows a compositional bias: basic residues.

The protein belongs to the CLU family. As to quaternary structure, may associate with the eukaryotic translation initiation factor 3 (eIF-3) complex. Associates with the 80S ribosome.

The protein resides in the cytoplasm. Its function is as follows. mRNA-binding protein involved in proper cytoplasmic distribution of mitochondria. This is Clustered mitochondria protein 1 from Saccharomyces cerevisiae (strain ATCC 204508 / S288c) (Baker's yeast).